Consider the following 218-residue polypeptide: DNA-directed RNA polymerase III subunit RPC7-like (218 aa).

Positions 133–218 (LPKRPPKTTE…SDDNMDEAIY (86 aa)) are disordered. A compositionally biased stretch (basic and acidic residues) spans 139-160 (KTTEDKEETIQKLETLEKKEEE). Composition is skewed to acidic residues over residues 161-193 (VTSE…EETD) and 201-218 (NGED…EAIY).

Belongs to the eukaryotic RPC7 RNA polymerase subunit family. As to quaternary structure, component of the RNA polymerase III (Pol III) complex consisting of 17 subunits. Pol III exists as two alternative complexes defined by the mutually exclusive incorporation of subunit POLR3G/RPC7alpha or POLR3GL/RPC7beta. Found in a trimeric complex with POLR3C/RPC3 and POLR3F/RPC6. Directly interacts with POLR3C. In terms of tissue distribution, widely expressed. Expressed in CD4-positive T cells.

Its subcellular location is the nucleus. Its function is as follows. DNA-dependent RNA polymerase catalyzes the transcription of DNA into RNA using the four ribonucleoside triphosphates as substrates. Specific peripheric component of RNA polymerase III which synthesizes small RNAs, such as 5S rRNA and tRNAs. This chain is DNA-directed RNA polymerase III subunit RPC7-like, found in Homo sapiens (Human).